Reading from the N-terminus, the 127-residue chain is Large ribosomal subunit protein bL12 (127 aa).

The protein belongs to the bacterial ribosomal protein bL12 family. Homodimer. Part of the ribosomal stalk of the 50S ribosomal subunit. Forms a multimeric L10(L12)X complex, where L10 forms an elongated spine to which 2 to 4 L12 dimers bind in a sequential fashion. Binds GTP-bound translation factors.

In terms of biological role, forms part of the ribosomal stalk which helps the ribosome interact with GTP-bound translation factors. Is thus essential for accurate translation. This is Large ribosomal subunit protein bL12 from Acidiphilium cryptum (strain JF-5).